A 60-amino-acid chain; its full sequence is Large ribosomal subunit protein uL30 (60 aa).

Belongs to the universal ribosomal protein uL30 family. As to quaternary structure, part of the 50S ribosomal subunit.

The sequence is that of Large ribosomal subunit protein uL30 from Christiangramia forsetii (strain DSM 17595 / CGMCC 1.15422 / KT0803) (Gramella forsetii).